Reading from the N-terminus, the 306-residue chain is Sulfate adenylyltransferase subunit 2 (306 aa).

It belongs to the PAPS reductase family. CysD subfamily. As to quaternary structure, heterodimer composed of CysD, the smaller subunit, and CysN.

It catalyses the reaction sulfate + ATP + H(+) = adenosine 5'-phosphosulfate + diphosphate. Its pathway is sulfur metabolism; hydrogen sulfide biosynthesis; sulfite from sulfate: step 1/3. Its function is as follows. With CysN forms the ATP sulfurylase (ATPS) that catalyzes the adenylation of sulfate producing adenosine 5'-phosphosulfate (APS) and diphosphate, the first enzymatic step in sulfur assimilation pathway. APS synthesis involves the formation of a high-energy phosphoric-sulfuric acid anhydride bond driven by GTP hydrolysis by CysN coupled to ATP hydrolysis by CysD. This is Sulfate adenylyltransferase subunit 2 from Brucella anthropi (strain ATCC 49188 / DSM 6882 / CCUG 24695 / JCM 21032 / LMG 3331 / NBRC 15819 / NCTC 12168 / Alc 37) (Ochrobactrum anthropi).